The following is a 129-amino-acid chain: MKYFVVALALVAAFACIAESKPAESEHELAEVEEENELADLEDAVWLEHLADLSDLEEARGFFGNTWKKIKGKADKIMLKKAVKIMVKKEGISKEEAQAKVDAMSKKQIRLYVLKHYGKKALQKVSEKL.

The signal sequence occupies residues 1 to 20 (MKYFVVALALVAAFACIAES). Positions 21–60 (KPAESEHELAEVEEENELADLEDAVWLEHLADLSDLEEAR) are excised as a propeptide.

Belongs to the cationic peptide 06 (cytoinsectotoxin) family. Expressed by the venom gland.

Its subcellular location is the secreted. Insecticidal, cytolytic and antimicrobial peptide. Forms voltage-dependent, ion-permeable channels in membranes. At high concentration causes cell membrane lysis. This is M-zodatoxin-Lt8k (cit 1-10) from Lachesana tarabaevi (Spider).